We begin with the raw amino-acid sequence, 373 residues long: Dual-specificity RNA methyltransferase RlmN (373 aa).

Glutamate 94 functions as the Proton acceptor in the catalytic mechanism. A Radical SAM core domain is found at 100–339 (EEDRATLCVS…VIVRKTRGDD (240 aa)). Cysteines 107 and 344 form a disulfide. Cysteine 114, cysteine 118, and cysteine 121 together coordinate [4Fe-4S] cluster. Residues 168-169 (GE), serine 200, 222-224 (SIH), and asparagine 301 contribute to the S-adenosyl-L-methionine site. Catalysis depends on cysteine 344, which acts as the S-methylcysteine intermediate.

This sequence belongs to the radical SAM superfamily. RlmN family. It depends on [4Fe-4S] cluster as a cofactor.

It is found in the cytoplasm. The catalysed reaction is adenosine(2503) in 23S rRNA + 2 reduced [2Fe-2S]-[ferredoxin] + 2 S-adenosyl-L-methionine = 2-methyladenosine(2503) in 23S rRNA + 5'-deoxyadenosine + L-methionine + 2 oxidized [2Fe-2S]-[ferredoxin] + S-adenosyl-L-homocysteine. It catalyses the reaction adenosine(37) in tRNA + 2 reduced [2Fe-2S]-[ferredoxin] + 2 S-adenosyl-L-methionine = 2-methyladenosine(37) in tRNA + 5'-deoxyadenosine + L-methionine + 2 oxidized [2Fe-2S]-[ferredoxin] + S-adenosyl-L-homocysteine. Specifically methylates position 2 of adenine 2503 in 23S rRNA and position 2 of adenine 37 in tRNAs. m2A2503 modification seems to play a crucial role in the proofreading step occurring at the peptidyl transferase center and thus would serve to optimize ribosomal fidelity. The sequence is that of Dual-specificity RNA methyltransferase RlmN from Shewanella frigidimarina (strain NCIMB 400).